Here is a 367-residue protein sequence, read N- to C-terminus: Quinolinate synthase (367 aa).

Residues His-45 and Ser-62 each coordinate iminosuccinate. Cys-109 contributes to the [4Fe-4S] cluster binding site. Residues 140–142 and Ser-161 each bind iminosuccinate; that span reads YVN. Cys-229 provides a ligand contact to [4Fe-4S] cluster. Residues 255 to 257 and Thr-272 each bind iminosuccinate; that span reads HPE. Cys-319 provides a ligand contact to [4Fe-4S] cluster.

It belongs to the quinolinate synthase family. Type 3 subfamily. It depends on [4Fe-4S] cluster as a cofactor.

It localises to the cytoplasm. The enzyme catalyses iminosuccinate + dihydroxyacetone phosphate = quinolinate + phosphate + 2 H2O + H(+). It functions in the pathway cofactor biosynthesis; NAD(+) biosynthesis; quinolinate from iminoaspartate: step 1/1. Catalyzes the condensation of iminoaspartate with dihydroxyacetone phosphate to form quinolinate. The protein is Quinolinate synthase of Geobacillus sp. (strain WCH70).